Reading from the N-terminus, the 318-residue chain is Protein-methionine-sulfoxide reductase catalytic subunit MsrP (318 aa).

Residues 1 to 40 constitute a signal peptide (tat-type signal); the sequence is MNRFTRYDVTPEAIFNQRRQIIKAMGLGAAALSLPNIGFA. Mo-molybdopterin-binding positions include Asn72, 75–76, Cys130, Thr165, Asn217, Arg222, and 233–235; these read YE and SIK.

Belongs to the MsrP family. Heterodimer of a catalytic subunit (MsrP) and a heme-binding subunit (MsrQ). Requires Mo-molybdopterin as cofactor. Post-translationally, predicted to be exported by the Tat system. The position of the signal peptide cleavage has not been experimentally proven.

It is found in the periplasm. It carries out the reaction L-methionyl-[protein] + a quinone + H2O = L-methionyl-(S)-S-oxide-[protein] + a quinol. The catalysed reaction is L-methionyl-[protein] + a quinone + H2O = L-methionyl-(R)-S-oxide-[protein] + a quinol. In terms of biological role, part of the MsrPQ system that repairs oxidized periplasmic proteins containing methionine sulfoxide residues (Met-O), using respiratory chain electrons. Thus protects these proteins from oxidative-stress damage caused by reactive species of oxygen and chlorine generated by the host defense mechanisms. MsrPQ is essential for the maintenance of envelope integrity under bleach stress, rescuing a wide series of structurally unrelated periplasmic proteins from methionine oxidation. The catalytic subunit MsrP is non-stereospecific, being able to reduce both (R-) and (S-) diastereoisomers of methionine sulfoxide. The sequence is that of Protein-methionine-sulfoxide reductase catalytic subunit MsrP from Actinobacillus pleuropneumoniae serotype 5b (strain L20).